The primary structure comprises 443 residues: Probable glycine dehydrogenase (decarboxylating) subunit 1 (443 aa).

The protein belongs to the GcvP family. N-terminal subunit subfamily. As to quaternary structure, the glycine cleavage system is composed of four proteins: P, T, L and H. In this organism, the P 'protein' is a heterodimer of two subunits.

It carries out the reaction N(6)-[(R)-lipoyl]-L-lysyl-[glycine-cleavage complex H protein] + glycine + H(+) = N(6)-[(R)-S(8)-aminomethyldihydrolipoyl]-L-lysyl-[glycine-cleavage complex H protein] + CO2. Its function is as follows. The glycine cleavage system catalyzes the degradation of glycine. The P protein binds the alpha-amino group of glycine through its pyridoxal phosphate cofactor; CO(2) is released and the remaining methylamine moiety is then transferred to the lipoamide cofactor of the H protein. The protein is Probable glycine dehydrogenase (decarboxylating) subunit 1 of Koribacter versatilis (strain Ellin345).